The primary structure comprises 96 residues: MIKSELIARLANENPHLTQKDVERVVGVILERMIGALEDGGRVELRGFGALSVRSRPARTGRNPRTGEAVDVRAKHVPFFKSGKELRARLNADGDE.

This sequence belongs to the bacterial histone-like protein family. In terms of assembly, heterodimer of an alpha and a beta chain.

In terms of biological role, this protein is one of the two subunits of integration host factor, a specific DNA-binding protein that functions in genetic recombination as well as in transcriptional and translational control. The polypeptide is Integration host factor subunit beta (Caulobacter vibrioides (strain ATCC 19089 / CIP 103742 / CB 15) (Caulobacter crescentus)).